The chain runs to 23 residues: Phospholipase A2 crotoxin basic chain 3 (23 aa).

Ca(2+) is required as a cofactor. Post-translationally, contains 7 disulfide bonds. As to expression, expressed by the venom gland.

Its subcellular location is the secreted. It carries out the reaction a 1,2-diacyl-sn-glycero-3-phosphocholine + H2O = a 1-acyl-sn-glycero-3-phosphocholine + a fatty acid + H(+). In terms of biological role, snake venom phospholipase A2 (PLA2) that shows presynaptic neurotoxicity. PLA2 catalyzes the calcium-dependent hydrolysis of the 2-acyl groups in 3-sn-phosphoglycerides. The polypeptide is Phospholipase A2 crotoxin basic chain 3 (Crotalus durissus terrificus (South American rattlesnake)).